We begin with the raw amino-acid sequence, 551 residues long: Rqc2 homolog RqcH (551 aa).

Residues 363–551 (YQKLKEAVKY…SKKIASMKKS (189 aa)) are required for fibronectin binding.

Belongs to the NEMF family. Associates with stalled 50S ribosomal subunits, binds to RqcP. Interacts with human fibronectin.

It localises to the cell surface. The protein resides in the cytoplasm. Key component of the ribosome quality control system (RQC), a ribosome-associated complex that mediates the extraction of incompletely synthesized nascent chains from stalled ribosomes and their subsequent degradation. RqcH recruits Ala-charged tRNA, and with RqcP directs the elongation of stalled nascent chains on 50S ribosomal subunits, leading to non-templated C-terminal alanine extensions (Ala tail). The Ala tail promotes nascent chain degradation. May add between 1 and at least 8 Ala residues. Binds to stalled 50S ribosomal subunits. Functionally, recombinant protein binds to immobilized human fibronectin; binding is saturable and competed by heparin. Recombinant protein inhibits binding of whole cells to fibronectin. This is Rqc2 homolog RqcH from Streptococcus pneumoniae (strain ATCC BAA-255 / R6).